We begin with the raw amino-acid sequence, 229 residues long: Probable septum site-determining protein MinC (229 aa).

It belongs to the MinC family. In terms of assembly, interacts with MinD and FtsZ.

Its function is as follows. Cell division inhibitor that blocks the formation of polar Z ring septums. Rapidly oscillates between the poles of the cell to destabilize FtsZ filaments that have formed before they mature into polar Z rings. Prevents FtsZ polymerization. The sequence is that of Probable septum site-determining protein MinC from Ruminiclostridium cellulolyticum (strain ATCC 35319 / DSM 5812 / JCM 6584 / H10) (Clostridium cellulolyticum).